Reading from the N-terminus, the 84-residue chain is Putative membrane protein insertion efficiency factor (84 aa).

Belongs to the UPF0161 family.

It localises to the cell inner membrane. Its function is as follows. Could be involved in insertion of integral membrane proteins into the membrane. The polypeptide is Putative membrane protein insertion efficiency factor (Shewanella sp. (strain ANA-3)).